We begin with the raw amino-acid sequence, 224 residues long: Pyridoxine/pyridoxamine 5'-phosphate oxidase (224 aa).

Residues 69–74, 83–84, R89, K90, and Q112 each bind FMN; these read RHVLLK and FT. A substrate-binding site is contributed by K74. The substrate site is built by Y130, R134, and S138. FMN-binding positions include 148-149 and W194; that span reads QS. A substrate-binding site is contributed by 200-202; the sequence is RMH. R204 contacts FMN.

This sequence belongs to the pyridoxamine 5'-phosphate oxidase family. In terms of assembly, homodimer. FMN serves as cofactor.

The catalysed reaction is pyridoxamine 5'-phosphate + O2 + H2O = pyridoxal 5'-phosphate + H2O2 + NH4(+). It carries out the reaction pyridoxine 5'-phosphate + O2 = pyridoxal 5'-phosphate + H2O2. The protein operates within cofactor metabolism; pyridoxal 5'-phosphate salvage; pyridoxal 5'-phosphate from pyridoxamine 5'-phosphate: step 1/1. It participates in cofactor metabolism; pyridoxal 5'-phosphate salvage; pyridoxal 5'-phosphate from pyridoxine 5'-phosphate: step 1/1. In terms of biological role, catalyzes the oxidation of either pyridoxine 5'-phosphate (PNP) or pyridoxamine 5'-phosphate (PMP) into pyridoxal 5'-phosphate (PLP). The protein is Pyridoxine/pyridoxamine 5'-phosphate oxidase of Acidothermus cellulolyticus (strain ATCC 43068 / DSM 8971 / 11B).